We begin with the raw amino-acid sequence, 551 residues long: Structure-specific endonuclease subunit MUS81 (551 aa).

Disordered stretches follow at residues 85–131 and 231–255; these read LASG…AGYW and PEEH…EVGV. The residue at position 95 (Ser-95) is a Phosphoserine. Residues 110–131 show a composition bias toward polar residues; sequence VQGSSMPVPTQPQAGSTNAGYW. The segment at 124–243 is interaction with BLM; the sequence is GSTNAGYWPA…HHEESPVPEA (120 aa). Positions 131–230 are winged helix domain (WHD); critical for endonuclease activity; that stretch reads WPAQNSGARE…GLSTLNTAFQ (100 aa). The region spanning 270–372 is the ERCC4 domain; that stretch reads LLCVDIGETR…HRIYLVEEHG (103 aa). Active-site residues include Asp-274, Glu-277, and Asp-307. Asp-274, Glu-277, Asp-307, Glu-333, and Arg-334 together coordinate Mg(2+). The segment at 471 to 545 is helix-hairpin-helix (2HhH); involved in DNA recognition and bending; that stretch reads VREVFARQLM…LSRTLYQLYC (75 aa).

This sequence belongs to the XPF family. In terms of assembly, part of the heterodimeric DNA structure-specific endonuclease complex MUS81-EME1. Part of the heterodimeric DNA structure-specific endonuclease complex MUS81-EME2. Interacts with BLM; may stimulate the endonuclease activity of MUS81. Interacts with SLX4/BTBD12; this interaction is direct and links the MUS81-EME1 complex to SLX4, which may coordinate the action of the structure-specific endonuclease during DNA repair. Interacts with DCLRE1B/Apollo. Interacts with RECQL5; this interaction stimulates mitotic DNA synthesis. Interacts with CHEK2. It depends on Mg(2+) as a cofactor.

The protein resides in the nucleus. It localises to the nucleolus. In terms of biological role, catalytic subunit of two functionally distinct, structure-specific, heterodimeric DNA endonucleases MUS81-EME1 and MUS81-EME2 that are involved in the maintenance of genome stability. Both endonucleases have essentially the same substrate specificity though MUS81-EME2 is more active than its MUS81-EME1 counterpart. Both cleave 3'-flaps and nicked Holliday junctions, and exhibit limited endonuclease activity with 5' flaps and nicked double-stranded DNAs. MUS81-EME2 which is active during the replication of DNA is more specifically involved in replication fork processing. Replication forks frequently encounter obstacles to their passage, including DNA base lesions, DNA interstrand cross-links, difficult-to-replicate sequences, transcription bubbles, or tightly bound proteins. One mechanism for the restart of a stalled replication fork involves nucleolytic cleavage mediated by the MUS81-EME2 endonuclease. By acting upon the stalled fork, MUS81-EME2 generates a DNA double-strand break (DSB) that can be repaired by homologous recombination, leading to the restoration of an active fork. MUS81-EME2 could also function in telomere maintenance. MUS81-EME1, on the other hand, is active later in the cell cycle and functions in the resolution of mitotic recombination intermediates including the Holliday junctions, the four-way DNA intermediates that form during homologous recombination. The chain is Structure-specific endonuclease subunit MUS81 from Rattus norvegicus (Rat).